The primary structure comprises 140 residues: Hemoglobin subunit alpha (140 aa).

A Globin domain is found at 1-140 (LSAADKGHVK…VSTVLTSKYR (140 aa)). S2 is modified (phosphoserine). An N6-succinyllysine mark is found at K6 and K10. K15 is subject to N6-acetyllysine; alternate. K15 is subject to N6-succinyllysine; alternate. The residue at position 23 (Y23) is a Phosphotyrosine. Position 34 is a phosphoserine (S34). At K39 the chain carries N6-succinyllysine. The residue at position 48 (S48) is a Phosphoserine. H57 lines the O2 pocket. Position 86 (H86) interacts with heme b. S101 is modified (phosphoserine). T107 carries the phosphothreonine modification. S123 bears the Phosphoserine mark. Phosphothreonine is present on residues T133 and T136. Phosphoserine is present on S137.

Belongs to the globin family. In terms of assembly, heterotetramer of two alpha chains and two beta chains. Red blood cells.

Its function is as follows. Involved in oxygen transport from the lung to the various peripheral tissues. In terms of biological role, hemopressin acts as an antagonist peptide of the cannabinoid receptor CNR1. Hemopressin-binding efficiently blocks cannabinoid receptor CNR1 and subsequent signaling. The protein is Hemoglobin subunit alpha (HBA) of Tragelaphus strepsiceros (Greater kudu).